The primary structure comprises 828 residues: Periplasmic nitrate reductase (828 aa).

Positions 1-31 form a signal peptide, tat-type signal; that stretch reads MKLSRRSFMKANAVAAAAAAAGLSVPGVARA. A 4Fe-4S Mo/W bis-MGD-type domain is found at 39–95; the sequence is IKWDKAPCRFCGTGCGVLVGTQQGRVVACQGDPDAPVNRGLNCIKGYFLPKIMYGKD. [4Fe-4S] cluster is bound by residues C46, C49, C53, and C81. Residues K83, Q150, N175, C179, 212–219, 243–247, 262–264, M372, Q376, N482, 508–509, K531, D558, and 718–727 each bind Mo-bis(molybdopterin guanine dinucleotide); these read WGSNMAEM, STFQH, QSD, SD, and TGRVLEHWHT. F794 is a substrate binding site. N802 and K819 together coordinate Mo-bis(molybdopterin guanine dinucleotide).

The protein belongs to the prokaryotic molybdopterin-containing oxidoreductase family. NasA/NapA/NarB subfamily. As to quaternary structure, component of the periplasmic nitrate reductase NapAB complex composed of NapA and NapB. The cofactor is [4Fe-4S] cluster. Mo-bis(molybdopterin guanine dinucleotide) is required as a cofactor. Post-translationally, predicted to be exported by the Tat system. The position of the signal peptide cleavage has not been experimentally proven.

It localises to the periplasm. It carries out the reaction 2 Fe(II)-[cytochrome] + nitrate + 2 H(+) = 2 Fe(III)-[cytochrome] + nitrite + H2O. Catalytic subunit of the periplasmic nitrate reductase complex NapAB. Receives electrons from NapB and catalyzes the reduction of nitrate to nitrite. This chain is Periplasmic nitrate reductase, found in Salmonella arizonae (strain ATCC BAA-731 / CDC346-86 / RSK2980).